The following is a 509-amino-acid chain: Dihydrolipoyl dehydrogenase, mitochondrial (509 aa).

The transit peptide at 1–35 (MQSWSRVYCSLAKKGHFNRLSHGLQGASSVPLRTY) directs the protein to the mitochondrion. Lys-66 is modified (N6-acetyllysine; alternate). Lys-66 bears the N6-succinyllysine; alternate mark. Residues 71-80 (EKNETLGGTC) and Lys-89 contribute to the FAD site. A disulfide bridge links Cys-80 with Cys-85. N6-acetyllysine; alternate occurs at positions 104, 122, 132, and 143. Lys-104, Lys-122, Lys-132, and Lys-143 each carry N6-succinyllysine; alternate. Gly-154 is an FAD binding site. Lys-159 is modified (N6-succinyllysine). Residue 183–185 (TGS) coordinates FAD. Residues 220 to 227 (GAGVIGVE) and Glu-243 contribute to the NAD(+) site. Residues Lys-273 and Lys-277 each carry the N6-succinyllysine modification. Position 278 (Val-278) interacts with NAD(+). Phosphoserine occurs at positions 285 and 297. Gly-314 serves as a coordination point for NAD(+). N6-acetyllysine is present on Lys-346. Residues Asp-355 and 361–364 (MLAH) each bind FAD. Lys-410 carries the N6-acetyllysine; alternate modification. Lys-410 bears the N6-succinyllysine; alternate mark. 2 positions are modified to N6-acetyllysine: Lys-417 and Lys-420. Lys-430 carries the post-translational modification N6-succinyllysine. Residue His-487 is the Proton acceptor of the active site. Ser-502 is subject to Phosphoserine. Lys-505 is subject to N6-acetyllysine; alternate. The residue at position 505 (Lys-505) is an N6-succinyllysine; alternate.

This sequence belongs to the class-I pyridine nucleotide-disulfide oxidoreductase family. In terms of assembly, homodimer. Part of the multimeric pyruvate dehydrogenase complex that contains multiple copies of pyruvate dehydrogenase (subunits PDHA (PDHA1 or PDHA2) and PDHB, E1), dihydrolipoamide acetyltransferase (DLAT, E2) and lipoamide dehydrogenase (DLD, E3). These subunits are bound to an inner core composed of about 48 DLAT and 12 PDHX molecules (by non covalent bonds). The 2-oxoglutarate dehydrogenase complex is composed of OGDH (2-oxoglutarate dehydrogenase; E1), DLST (dihydrolipoamide succinyltransferase; E2), DLD (dihydrolipoamide dehydrogenase; E3) and the assembly factor KGD4. It contains multiple copies of the three enzymatic components (E1, E2 and E3). In the nucleus, the 2-oxoglutarate dehydrogenase complex associates with KAT2A. Interacts with PDHX. Requires FAD as cofactor. In terms of processing, tyrosine phosphorylated.

The protein localises to the mitochondrion matrix. Its subcellular location is the nucleus. It localises to the cell projection. It is found in the cilium. The protein resides in the flagellum. The protein localises to the cytoplasmic vesicle. Its subcellular location is the secretory vesicle. It localises to the acrosome. It carries out the reaction N(6)-[(R)-dihydrolipoyl]-L-lysyl-[protein] + NAD(+) = N(6)-[(R)-lipoyl]-L-lysyl-[protein] + NADH + H(+). In terms of biological role, lipoamide dehydrogenase is a component of the glycine cleavage system as well as an E3 component of three alpha-ketoacid dehydrogenase complexes (pyruvate-, alpha-ketoglutarate-, and branched-chain amino acid-dehydrogenase complex). The 2-oxoglutarate dehydrogenase complex is mainly active in the mitochondrion. A fraction of the 2-oxoglutarate dehydrogenase complex also localizes in the nucleus and is required for lysine succinylation of histones: associates with KAT2A on chromatin and provides succinyl-CoA to histone succinyltransferase KAT2A. In monomeric form may have additional moonlighting function as serine protease. Involved in the hyperactivation of spermatazoa during capacitation and in the spermatazoal acrosome reaction. The sequence is that of Dihydrolipoyl dehydrogenase, mitochondrial (Dld) from Rattus norvegicus (Rat).